Consider the following 240-residue polypeptide: Citrate synthase-lysine N-methyltransferase CSKMT, mitochondrial (240 aa).

A mitochondrion-targeting transit peptide spans 1–28 (MAALRRMLHLPSLMMGTCRPFAGSLADS).

The protein belongs to the methyltransferase superfamily.

Its subcellular location is the mitochondrion. It carries out the reaction L-lysyl-[citrate synthase] + S-adenosyl-L-methionine = N(6)-methyl-L-lysyl-[citrate synthase] + S-adenosyl-L-homocysteine + H(+). The catalysed reaction is N(6)-methyl-L-lysyl-[citrate synthase] + S-adenosyl-L-methionine = N(6),N(6)-dimethyl-L-lysyl-[citrate synthase] + S-adenosyl-L-homocysteine + H(+). It catalyses the reaction N(6),N(6)-dimethyl-L-lysyl-[citrate synthase] + S-adenosyl-L-methionine = N(6),N(6),N(6)-trimethyl-L-lysyl-[citrate synthase] + S-adenosyl-L-homocysteine + H(+). Citrate synthase-lysine methyltransferase activity is inhibited by S-adenosylhomocysteine (AdoHcy) and oxaloacetate (OAA). Functionally, protein-lysine methyltransferase that selectively trimethylates citrate synthase (CS) in mitochondria. Seems to conduct trimethylation in a highly distributive manner rather than in a processive manner, and thus introduces a single methyl group per binding event. The protein is Citrate synthase-lysine N-methyltransferase CSKMT, mitochondrial of Homo sapiens (Human).